We begin with the raw amino-acid sequence, 251 residues long: Derlin-1 (251 aa).

Serine 2 bears the N-acetylserine mark. Residues 2–15 lie on the Cytoplasmic side of the membrane; the sequence is SDIGDWFRSIPTIT. The helical transmembrane segment at 16–31 threads the bilayer; it reads RYWFAATVAVPLVGKL. At 32–69 the chain is on the lumenal side; the sequence is GLISPAYFFLWPEAFLYRFQIWRPITATFYFPVGPGTG. The helical transmembrane segment at 70–89 threads the bilayer; the sequence is FLYLVNLYFLYQYSTRLETG. Residues 90–94 are Cytoplasmic-facing; it reads AFDGR. Residues 95 to 115 traverse the membrane as a helical segment; the sequence is PADYLFMLLFNWICIVITGLA. The Lumenal portion of the chain corresponds to 116-122; the sequence is MDMQLLM. The chain crosses the membrane as a helical span at residues 123–137; that stretch reads IPLIMSVLYVWAQLN. The Cytoplasmic portion of the chain corresponds to 138–154; sequence RDMIVSFWFGTRFKACY. Residues 155–166 form a helical membrane-spanning segment; the sequence is LPWVILGFNYII. Topologically, residues 167–170 are lumenal; the sequence is GGSV. The chain crosses the membrane as a helical span at residues 171 to 189; it reads INELIGNLVGHLYFFLMFR. The Cytoplasmic segment spans residues 190–251; the sequence is YPMDLGGRNF…WGQGFRLGDQ (62 aa). Residue serine 201 is modified to Phosphoserine. Threonine 202 bears the Phosphothreonine mark. Position 226 is a phosphoserine (serine 226). The disordered stretch occupies residues 229–251; sequence RAADQNGGGGRHNWGQGFRLGDQ. An SHP-box motif is present at residues 241-248; the sequence is NWGQGFRL.

It belongs to the derlin family. Homotetramer. The four subunits of the tetramer are arranged in a twofold symmetry. Forms homo- and heterooligomers with DERL2 and DERL3; binding to DERL3 is poorer than that between DERL2 and DERL3. Interacts (via SHP-box motif) with VCP. Interacts with AMFR, SELENOS, SEL1L, SELENOK and SYVN1, as well as with SEL1L-SYVN1 and VCP-SELENOS protein complexes; this interaction is weaker than that observed between DERL2 and these complexes. Interacts with NGLY1 and YOD1. Does not bind to EDEM1. Interacts with DNAJB9. Interacts with RNF103. Interacts with HM13. Interacts with XBP1 isoform 1 (via luminal/ectodomain domain); the interaction obviates the need for ectodomain shedding prior HM13/SPP-mediated XBP1 isoform 1 cleavage. Interacts with the signal recognition particle/SRP and the SRP receptor; in the process of endoplasmic reticulum stress-induced pre-emptive quality control. May interact with UBXN6. Interacts with ZFAND2B; probably through VCP. Interacts with CCDC47. Interacts with C18orf32. May interact with TRAM1. Forms a complex with SVIP and VCP/p97.

The protein localises to the endoplasmic reticulum membrane. Functionally, functional component of endoplasmic reticulum-associated degradation (ERAD) for misfolded lumenal proteins. Forms homotetramers which encircle a large channel traversing the endoplasmic reticulum (ER) membrane. This allows the retrotranslocation of misfolded proteins from the ER into the cytosol where they are ubiquitinated and degraded by the proteasome. The channel has a lateral gate within the membrane which provides direct access to membrane proteins with no need to reenter the ER lumen first. May mediate the interaction between VCP and the misfolded protein. Also involved in endoplasmic reticulum stress-induced pre-emptive quality control, a mechanism that selectively attenuates the translocation of newly synthesized proteins into the endoplasmic reticulum and reroutes them to the cytosol for proteasomal degradation. By controlling the steady-state expression of the IGF1R receptor, indirectly regulates the insulin-like growth factor receptor signaling pathway. In Bos taurus (Bovine), this protein is Derlin-1.